A 236-amino-acid chain; its full sequence is Phosphoribosylaminoimidazole-succinocarboxamide synthase (236 aa).

The protein belongs to the SAICAR synthetase family.

It catalyses the reaction 5-amino-1-(5-phospho-D-ribosyl)imidazole-4-carboxylate + L-aspartate + ATP = (2S)-2-[5-amino-1-(5-phospho-beta-D-ribosyl)imidazole-4-carboxamido]succinate + ADP + phosphate + 2 H(+). It participates in purine metabolism; IMP biosynthesis via de novo pathway; 5-amino-1-(5-phospho-D-ribosyl)imidazole-4-carboxamide from 5-amino-1-(5-phospho-D-ribosyl)imidazole-4-carboxylate: step 1/2. This Lysinibacillus sphaericus (strain C3-41) protein is Phosphoribosylaminoimidazole-succinocarboxamide synthase.